We begin with the raw amino-acid sequence, 413 residues long: Multifunctional CCA protein (413 aa).

Residues glycine 8 and arginine 11 each contribute to the ATP site. Residues glycine 8 and arginine 11 each contribute to the CTP site. Residues aspartate 21 and aspartate 23 each contribute to the Mg(2+) site. ATP contacts are provided by arginine 91, arginine 143, and arginine 146. Residues arginine 91, arginine 143, and arginine 146 each coordinate CTP. Residues 232 to 333 form the HD domain; the sequence is TGVHVMMVVD…VRFFERTDAL (102 aa).

The protein belongs to the tRNA nucleotidyltransferase/poly(A) polymerase family. Bacterial CCA-adding enzyme type 1 subfamily. Monomer. Can also form homodimers and oligomers. The cofactor is Mg(2+). Requires Ni(2+) as cofactor.

The enzyme catalyses a tRNA precursor + 2 CTP + ATP = a tRNA with a 3' CCA end + 3 diphosphate. It catalyses the reaction a tRNA with a 3' CCA end + 2 CTP + ATP = a tRNA with a 3' CCACCA end + 3 diphosphate. Catalyzes the addition and repair of the essential 3'-terminal CCA sequence in tRNAs without using a nucleic acid template. Adds these three nucleotides in the order of C, C, and A to the tRNA nucleotide-73, using CTP and ATP as substrates and producing inorganic pyrophosphate. tRNA 3'-terminal CCA addition is required both for tRNA processing and repair. Also involved in tRNA surveillance by mediating tandem CCA addition to generate a CCACCA at the 3' terminus of unstable tRNAs. While stable tRNAs receive only 3'-terminal CCA, unstable tRNAs are marked with CCACCA and rapidly degraded. The polypeptide is Multifunctional CCA protein (Burkholderia multivorans (strain ATCC 17616 / 249)).